The chain runs to 541 residues: Chloride channel CLIC-like protein 1 (541 aa).

The signal sequence occupies residues 1-18 (MLCSLLLCGCLLLITGYA). The Lumenal portion of the chain corresponds to 19–184 (HDDDWIDPTD…EDYFGVDPYN (166 aa)). A helical membrane pass occupies residues 185-205 (VFMVLLCLLCIVALVATELWT). Residues 206–217 (YVRWHTQLKRVC) are Cytoplasmic-facing. A helical membrane pass occupies residues 218–238 (IISFLVSLGWNWIYLYKVAFA). Topologically, residues 239–329 (QHQANVAKMA…GEFIKALMKE (91 aa)) are lumenal. The chain crosses the membrane as a helical span at residues 330 to 350 (IPVLLQIPVLVILALAVLGFC). The Cytoplasmic segment spans residues 351–541 (YGAGQSVPML…GTDPVSSPCG (191 aa)). Residues 362–381 (HFRGPEREPPRALEPDDRRR) are disordered. Residues 364–381 (RGPEREPPRALEPDDRRR) show a composition bias toward basic and acidic residues. 2 positions are modified to phosphoserine: Ser434 and Ser438. At Thr482 the chain carries Phosphothreonine. Residue Ser504 is modified to Phosphoserine. Basic and acidic residues predominate over residues 511 to 522 (QLKTDSECRPHS). Positions 511–541 (QLKTDSECRPHSTEAAAAAARGTDPVSSPCG) are disordered.

This sequence belongs to the chloride channel MCLC family. In terms of assembly, homomultimers. Interacts with mitochondrial protein PIGBOS1 (via C-terminus); the interaction occurs at the mitochondria-associated endoplasmic reticulum (ER) membrane, a zone of contact between the ER and mitochondrial membranes, but does not appear to play a role in ER-mitochondria tethering and is not affected by ER stress. Interacts with CALR. As to expression, expressed in testis (spermatocytes), liver and lung (at protein level). Expressed in spleen, liver, testis, kidney, heart, brain and lung.

It localises to the endoplasmic reticulum membrane. It carries out the reaction chloride(in) = chloride(out). The catalysed reaction is bromide(in) = bromide(out). It catalyses the reaction nitrate(in) = nitrate(out). The enzyme catalyses fluoride(in) = fluoride(out). Anion-selective channel with Ca(2+)-dependent and voltage-independent gating. Permeable to small monovalent anions with selectivity for bromide &gt; chloride &gt; nitrate &gt; fluoride. Operates in the endoplasmic reticulum (ER) membrane where it mediates chloride efflux to compensate for the loss of positive charges from the ER lumen upon Ca(2+) release. Contributes to the maintenance of ER Ca(2+) pools and activation of unfolded protein response to prevent accumulation of misfolded proteins in the ER lumen. Particularly involved in ER homeostasis mechanisms underlying motor neurons and retinal photoreceptors survival. The protein is Chloride channel CLIC-like protein 1 of Rattus norvegicus (Rat).